We begin with the raw amino-acid sequence, 506 residues long: AMP phosphorylase (506 aa).

AMP contacts are provided by residues Gly167, 193 to 198 (SRAITG), and Thr202. Asp255 acts as the Proton donor in catalysis. AMP contacts are provided by Ser263 and Lys287.

The protein belongs to the thymidine/pyrimidine-nucleoside phosphorylase family. Type 2 subfamily.

It carries out the reaction AMP + phosphate = alpha-D-ribose 1,5-bisphosphate + adenine. The enzyme catalyses CMP + phosphate = cytosine + alpha-D-ribose 1,5-bisphosphate. It catalyses the reaction UMP + phosphate = alpha-D-ribose 1,5-bisphosphate + uracil. Catalyzes the conversion of AMP and phosphate to adenine and ribose 1,5-bisphosphate (R15P). Exhibits phosphorylase activity toward CMP and UMP in addition to AMP. Functions in an archaeal AMP degradation pathway, together with R15P isomerase and RubisCO. The chain is AMP phosphorylase from Methanosarcina barkeri (strain Fusaro / DSM 804).